Consider the following 883-residue polypeptide: Phosphoenolpyruvate carboxylase (883 aa).

Catalysis depends on residues H138 and K546.

This sequence belongs to the PEPCase type 1 family. Mg(2+) is required as a cofactor.

The enzyme catalyses oxaloacetate + phosphate = phosphoenolpyruvate + hydrogencarbonate. Its function is as follows. Forms oxaloacetate, a four-carbon dicarboxylic acid source for the tricarboxylic acid cycle. The chain is Phosphoenolpyruvate carboxylase from Salmonella choleraesuis (strain SC-B67).